Here is a 644-residue protein sequence, read N- to C-terminus: DNA mismatch repair protein MutL (644 aa).

Residues Glu336–Glu400 are disordered. Over residues Ser373–Glu400 the composition is skewed to basic and acidic residues.

It belongs to the DNA mismatch repair MutL/HexB family.

In terms of biological role, this protein is involved in the repair of mismatches in DNA. It is required for dam-dependent methyl-directed DNA mismatch repair. May act as a 'molecular matchmaker', a protein that promotes the formation of a stable complex between two or more DNA-binding proteins in an ATP-dependent manner without itself being part of a final effector complex. The chain is DNA mismatch repair protein MutL from Shewanella sp. (strain MR-7).